A 631-amino-acid chain; its full sequence is DNA mismatch repair protein MutL (631 aa).

Disordered stretches follow at residues 337-362 (PHSP…ELQS) and 400-429 (AVQS…RAEL).

This sequence belongs to the DNA mismatch repair MutL/HexB family.

In terms of biological role, this protein is involved in the repair of mismatches in DNA. It is required for dam-dependent methyl-directed DNA mismatch repair. May act as a 'molecular matchmaker', a protein that promotes the formation of a stable complex between two or more DNA-binding proteins in an ATP-dependent manner without itself being part of a final effector complex. This is DNA mismatch repair protein MutL from Shewanella oneidensis (strain ATCC 700550 / JCM 31522 / CIP 106686 / LMG 19005 / NCIMB 14063 / MR-1).